A 410-amino-acid polypeptide reads, in one-letter code: Arginine deiminase (410 aa).

C400 functions as the Amidino-cysteine intermediate in the catalytic mechanism.

Belongs to the arginine deiminase family.

It is found in the cytoplasm. It catalyses the reaction L-arginine + H2O = L-citrulline + NH4(+). It functions in the pathway amino-acid degradation; L-arginine degradation via ADI pathway; carbamoyl phosphate from L-arginine: step 1/2. This is Arginine deiminase (arcA) from Lactococcus lactis subsp. lactis (strain IL1403) (Streptococcus lactis).